The primary structure comprises 122 residues: Large ribosomal subunit protein uL14 (122 aa).

It belongs to the universal ribosomal protein uL14 family. Part of the 50S ribosomal subunit. Forms a cluster with proteins L3 and L19. In the 70S ribosome, L14 and L19 interact and together make contacts with the 16S rRNA in bridges B5 and B8.

Its function is as follows. Binds to 23S rRNA. Forms part of two intersubunit bridges in the 70S ribosome. This chain is Large ribosomal subunit protein uL14, found in Mycobacterium ulcerans (strain Agy99).